We begin with the raw amino-acid sequence, 215 residues long: 3-dehydroquinate dehydratase (215 aa).

3-dehydroquinate contacts are provided by residues Ser6, 31–33, and Arg64; that span reads ELR. Catalysis depends on His111, which acts as the Proton donor/acceptor. Lys138 acts as the Schiff-base intermediate with substrate in catalysis. Positions 174, 193, and 197 each coordinate 3-dehydroquinate.

The protein belongs to the type-I 3-dehydroquinase family. In terms of assembly, homodimer.

It catalyses the reaction 3-dehydroquinate = 3-dehydroshikimate + H2O. It participates in metabolic intermediate biosynthesis; chorismate biosynthesis; chorismate from D-erythrose 4-phosphate and phosphoenolpyruvate: step 3/7. Involved in the third step of the chorismate pathway, which leads to the biosynthesis of aromatic amino acids. Catalyzes the cis-dehydration of 3-dehydroquinate (DHQ) and introduces the first double bond of the aromatic ring to yield 3-dehydroshikimate. This chain is 3-dehydroquinate dehydratase, found in Ignicoccus hospitalis (strain KIN4/I / DSM 18386 / JCM 14125).